The following is a 205-amino-acid chain: Holliday junction branch migration complex subunit RuvA (205 aa).

The tract at residues M1–A64 is domain I. Residues T65 to I143 are domain II. The tract at residues G144–G152 is flexible linker. Positions A153–Q205 are domain III.

This sequence belongs to the RuvA family. As to quaternary structure, homotetramer. Forms an RuvA(8)-RuvB(12)-Holliday junction (HJ) complex. HJ DNA is sandwiched between 2 RuvA tetramers; dsDNA enters through RuvA and exits via RuvB. An RuvB hexamer assembles on each DNA strand where it exits the tetramer. Each RuvB hexamer is contacted by two RuvA subunits (via domain III) on 2 adjacent RuvB subunits; this complex drives branch migration. In the full resolvosome a probable DNA-RuvA(4)-RuvB(12)-RuvC(2) complex forms which resolves the HJ.

It localises to the cytoplasm. Functionally, the RuvA-RuvB-RuvC complex processes Holliday junction (HJ) DNA during genetic recombination and DNA repair, while the RuvA-RuvB complex plays an important role in the rescue of blocked DNA replication forks via replication fork reversal (RFR). RuvA specifically binds to HJ cruciform DNA, conferring on it an open structure. The RuvB hexamer acts as an ATP-dependent pump, pulling dsDNA into and through the RuvAB complex. HJ branch migration allows RuvC to scan DNA until it finds its consensus sequence, where it cleaves and resolves the cruciform DNA. This chain is Holliday junction branch migration complex subunit RuvA, found in Brucella abortus (strain S19).